A 570-amino-acid chain; its full sequence is Glutamate--tRNA ligase, chloroplastic/mitochondrial (570 aa).

Residues 1-39 (MASLVYGTPWLRVRSLPELAPAFLRRRQSSLFYCSRRSF) constitute a chloroplast and mitochondrion transit peptide. 57–59 (RFA) serves as a coordination point for L-glutamate. The 'HIGH' region signature appears at 60-70 (PSPTGNLHVGG). Position 67 (H67) interacts with ATP. L-glutamate-binding positions include E93, 245–249 (YNFCV), and R263. Residues E266 and 301-305 (KLSKR) contribute to the ATP site. Residues 301 to 305 (KLSKR) carry the 'KMSKS' region motif.

This sequence belongs to the class-I aminoacyl-tRNA synthetase family. Glutamate--tRNA ligase type 1 subfamily.

The protein resides in the plastid. It localises to the chloroplast. Its subcellular location is the mitochondrion. The catalysed reaction is tRNA(Glu) + L-glutamate + ATP = L-glutamyl-tRNA(Glu) + AMP + diphosphate. In terms of biological role, catalyzes the attachment of glutamate to tRNA(Glu) in a two-step reaction: glutamate is first activated by ATP to form Glu-AMP and then transferred to the acceptor end of tRNA(Glu). This chain is Glutamate--tRNA ligase, chloroplastic/mitochondrial, found in Arabidopsis thaliana (Mouse-ear cress).